The sequence spans 347 residues: Histidinol-phosphate aminotransferase (347 aa).

At Lys-209 the chain carries N6-(pyridoxal phosphate)lysine.

Belongs to the class-II pyridoxal-phosphate-dependent aminotransferase family. Histidinol-phosphate aminotransferase subfamily. Homodimer. It depends on pyridoxal 5'-phosphate as a cofactor.

It catalyses the reaction L-histidinol phosphate + 2-oxoglutarate = 3-(imidazol-4-yl)-2-oxopropyl phosphate + L-glutamate. The protein operates within amino-acid biosynthesis; L-histidine biosynthesis; L-histidine from 5-phospho-alpha-D-ribose 1-diphosphate: step 7/9. The protein is Histidinol-phosphate aminotransferase of Syntrophotalea carbinolica (strain DSM 2380 / NBRC 103641 / GraBd1) (Pelobacter carbinolicus).